A 217-amino-acid polypeptide reads, in one-letter code: Probable cutinase 3 (217 aa).

Positions 1 to 17 are cleaved as a signal peptide; that stretch reads MSLRSLFVAGLATLALA. 2 disulfides stabilise this stretch: cysteine 39–cysteine 118 and cysteine 65–cysteine 79. The active-site Nucleophile is the serine 129. A disulfide bond links cysteine 180 and cysteine 187. The active site involves aspartate 184. The active-site Proton donor/acceptor is the histidine 197.

It belongs to the cutinase family.

Its subcellular location is the secreted. The catalysed reaction is cutin + H2O = cutin monomers.. Catalyzes the hydrolysis of complex carboxylic polyesters found in the cell wall of plants. Degrades cutin, a macromolecule that forms the structure of the plant cuticle. This Neosartorya fischeri (strain ATCC 1020 / DSM 3700 / CBS 544.65 / FGSC A1164 / JCM 1740 / NRRL 181 / WB 181) (Aspergillus fischerianus) protein is Probable cutinase 3.